The sequence spans 3623 residues: Cubilin (3623 aa).

The first 23 residues, 1 to 23 (MMNMSLPFLWSLLTLLIFAEVNG), serve as a signal peptide directing secretion. A propeptide spans 24 to 35 (EAGELELQRQKR) (removed in mature form). The interval 42–49 (PRMATERG) is interaction with AMN. The N-linked (GlcNAc...) asparagine glycan is linked to Asn-105. The 37-residue stretch at 132–168 (DKKVCSSNPCQNGGTCLNLHDSFFCICPPQWKGPLCS) folds into the EGF-like 1 domain. 9 disulfides stabilise this stretch: Cys-136–Cys-147, Cys-141–Cys-156, Cys-158–Cys-167, Cys-174–Cys-190, Cys-184–Cys-199, Cys-201–Cys-210, Cys-267–Cys-280, Cys-274–Cys-289, and Cys-292–Cys-303. Residues 170-211 (DVNECEIYSGTPLSCQNGGTCVNTMGSYSCHCPPETYGPQCA) enclose the EGF-like 2; calcium-binding domain. The EGF-like 3; calcium-binding domain occupies 263–304 (DRDECSFQPGPCSTLVQCFNTQGSFYCGACPTGWQGNGYICE). In terms of domain architecture, EGF-like 4; calcium-binding spans 305 to 348 (DINECEINNGGCSVAPPVECVNTPGSSHCQACPPGYQGDGRVCT). 2 consecutive EGF-like domains span residues 349-385 (LTDI…YTGN) and 395-430 (LSNI…VNCT). 13 disulfides stabilise this stretch: Cys-353–Cys-366, Cys-360–Cys-376, Cys-399–Cys-409, Cys-404–Cys-418, Cys-420–Cys-429, Cys-436–Cys-447, Cys-441–Cys-456, Cys-458–Cys-467, Cys-474–Cys-500, Cys-527–Cys-549, Cys-590–Cys-616, Cys-643–Cys-665, and Cys-708–Cys-734. Asn-428 carries N-linked (GlcNAc...) asparagine glycosylation. Residues 432 to 468 (NINECLSNPCLNGGTCVDGVDSFSCECTRLWTGALCQ) form the EGF-like 7; calcium-binding domain. CUB domains follow at residues 474–586 (CGES…WETQ), 590–702 (CGGI…YLTS), 708–816 (CGGN…YQVA), 816–928 (ACGD…FSAE), 932–1042 (CGEI…YEAI), 1048–1161 (CLQD…WDGS), 1165–1277 (CGGN…YRQT), 1278–1389 (CENV…WFVY), 1391–1506 (CGGE…WQAV), 1510–1619 (CGGI…FRQA), 1620–1734 (CGGH…VTAS), 1738–1850 (CGGT…FMKI), 1852–1963 (GNDN…WFAV), 1978–2091 (CGGF…FHKS), 2092–2213 (CGGY…YEAK), 2217–2334 (CGGN…YSIA), 2336–2448 (CGGR…FESS), 2452–2565 (CGGD…YTSS), 2570–2687 (CGGS…YSFT), 2689–2801 (CGGI…WNTQ), 2805–2919 (CGGI…FVSR), 2920–3035 (CGSN…YRII), 3037–3150 (CGGV…FRQT), 3157–3274 (CGGY…YTIM), 3278–3393 (CGGT…YQIA), 3395–3507 (CNRD…WTSS), and 3511–3623 (CGGT…TWDS). Residue Asn-482 is glycosylated (N-linked (GlcNAc...) asparagine). Residues Asn-711, Asn-749, Asn-781, and Asn-857 are each glycosylated (N-linked (GlcNAc...) asparagine). 2 disulfide bridges follow: Cys-869–Cys-891 and Cys-932–Cys-958. N-linked (GlcNAc...) asparagine glycosylation is present at Asn-957. Residue Glu-980 participates in Ca(2+) binding. A glycan (N-linked (GlcNAc...) asparagine) is linked at Asn-984. Cys-985 and Cys-1005 are joined by a disulfide. The Ca(2+) site is built by Asp-988, Asp-1027, Asp-1029, and Leu-1030. Cys-1048 and Cys-1074 form a disulfide bridge. Asn-1092 carries N-linked (GlcNAc...) asparagine glycosylation. The Ca(2+) site is built by Glu-1096, Asp-1105, Asp-1146, Ile-1148, and Asp-1149. An intrachain disulfide couples Cys-1165 to Cys-1191. The N-linked (GlcNAc...) asparagine glycan is linked to Asn-1168. Residue Glu-1213 participates in Ca(2+) binding. A glycan (N-linked (GlcNAc...) asparagine) is linked at Asn-1217. A disulfide bridge connects residues Cys-1218 and Cys-1240. 4 residues coordinate Ca(2+): Asp-1221, Asp-1262, Gly-1264, and Gln-1265. Cys-1278 and Cys-1306 are oxidised to a cystine. N-linked (GlcNAc...) asparagine glycans are attached at residues Asn-1285, Asn-1307, and Asn-1319. Glu-1328 provides a ligand contact to Ca(2+). The N-linked (GlcNAc...) asparagine glycan is linked to Asn-1332. An intrachain disulfide couples Cys-1333 to Cys-1351. Ca(2+) is bound by residues Asp-1336, Asp-1373, and Val-1375. 2 cysteine pairs are disulfide-bonded: Cys-1391–Cys-1417 and Cys-1444–Cys-1466. Asn-1500 is a glycosylation site (N-linked (GlcNAc...) asparagine). Cys-1510 and Cys-1536 form a disulfide bridge. N-linked (GlcNAc...) asparagine glycosylation is present at Asn-1551. 5 disulfide bridges follow: Cys-1563–Cys-1581, Cys-1620–Cys-1647, Cys-1675–Cys-1697, Cys-1738–Cys-1764, and Cys-1791–Cys-1812. Residue Asn-1646 is glycosylated (N-linked (GlcNAc...) asparagine). N-linked (GlcNAc...) asparagine glycosylation is found at Asn-1802, Asn-1819, and Asn-1885. 3 disulfides stabilise this stretch: Cys-1905–Cys-1927, Cys-1978–Cys-2006, and Cys-2032–Cys-2054. 2 N-linked (GlcNAc...) asparagine glycosylation sites follow: Asn-2085 and Asn-2117. 2 disulfides stabilise this stretch: Cys-2092-Cys-2118 and Cys-2217-Cys-2247. N-linked (GlcNAc...) asparagine glycosylation occurs at Asn-2274. Disulfide bonds link Cys-2275–Cys-2297 and Cys-2336–Cys-2363. Asn-2386 and Asn-2400 each carry an N-linked (GlcNAc...) asparagine glycan. Disulfide bonds link Cys-2390–Cys-2411, Cys-2452–Cys-2478, and Cys-2505–Cys-2527. N-linked (GlcNAc...) asparagine glycans are attached at residues Asn-2531, Asn-2581, Asn-2592, and Asn-2610. Cys-2570 and Cys-2599 are disulfide-bonded. Intrachain disulfides connect Cys-2628-Cys-2649, Cys-2689-Cys-2715, Cys-2742-Cys-2764, Cys-2805-Cys-2831, Cys-2860-Cys-2883, Cys-2920-Cys-2946, and Cys-2977-Cys-2999. A glycan (N-linked (GlcNAc...) asparagine) is linked at Asn-2813. N-linked (GlcNAc...) asparagine glycosylation is found at Asn-2923 and Asn-2945. Thr-3008 bears the Phosphothreonine mark. 2 cysteine pairs are disulfide-bonded: Cys-3037–Cys-3064 and Cys-3091–Cys-3113. Residues Asn-3042, Asn-3103, Asn-3125, and Asn-3165 are each glycosylated (N-linked (GlcNAc...) asparagine). 2 cysteine pairs are disulfide-bonded: Cys-3157–Cys-3185 and Cys-3215–Cys-3237. Residues Asn-3268, Asn-3283, Asn-3290, and Asn-3295 are each glycosylated (N-linked (GlcNAc...) asparagine). Intrachain disulfides connect Cys-3278/Cys-3306 and Cys-3332/Cys-3354. N-linked (GlcNAc...) asparagine glycosylation is present at Asn-3357. An intrachain disulfide couples Cys-3395 to Cys-3421. N-linked (GlcNAc...) asparagine glycosylation is found at Asn-3430, Asn-3457, Asn-3533, and Asn-3576. Cystine bridges form between Cys-3448/Cys-3470, Cys-3511/Cys-3537, and Cys-3564/Cys-3586.

In terms of assembly, interacts with AMN. Component of the cubam complex composed of one CUBN trimer and one AMN chain. The cubam complex can dimerize. Interacts with LRP2 in a dual-receptor complex in a calcium-dependent manner. Found in a complex with PID1/PCLI1, LRP1 and CUBNI. Interacts with LRP1 and PID1/PCLI1. In terms of processing, the precursor is cleaved by a trans-Golgi proteinase furin, removing a propeptide. N-glycosylated. In terms of tissue distribution, detected in kidney cortex (at protein level). Expressed in kidney proximal tubule cells, placenta, visceral yolk-sac cells and in absorptive intestinal cells. Expressed in the epithelium of intestine and kidney.

It localises to the apical cell membrane. Its subcellular location is the cell membrane. The protein resides in the membrane. It is found in the coated pit. The protein localises to the endosome. It localises to the lysosome membrane. In terms of biological role, endocytic receptor which plays a role in lipoprotein, vitamin and iron metabolism by facilitating their uptake. Acts together with LRP2 to mediate endocytosis of high-density lipoproteins, GC, hemoglobin, ALB, TF and SCGB1A1. Acts together with AMN to mediate endocytosis of the CBLIF-cobalamin complex. Binds to ALB, MB, Kappa and lambda-light chains, TF, hemoglobin, GC, SCGB1A1, APOA1, high density lipoprotein, and the CBLIF-cobalamin complex. Ligand binding requires calcium. Serves as important transporter in several absorptive epithelia, including intestine, renal proximal tubules and embryonic yolk sac. May play an important role in the development of the peri-implantation embryo through internalization of APOA1 and cholesterol. Binds to LGALS3 at the maternal-fetal interface. This Homo sapiens (Human) protein is Cubilin (CUBN).